The sequence spans 846 residues: Matrin-3 (846 aa).

Ser-2 carries the N-acetylserine modification. Lys-3 is subject to N6-acetyllysine; alternate. Residue Lys-3 forms a Glycyl lysine isopeptide (Lys-Gly) (interchain with G-Cter in SUMO2); alternate linkage. A phosphoserine mark is found at Ser-4, Ser-9, Ser-14, Ser-22, Ser-41, Ser-118, and Ser-126. Glycyl lysine isopeptide (Lys-Gly) (interchain with G-Cter in SUMO2) cross-links involve residues Lys-132 and Lys-146. Disordered regions lie at residues 147–174 and 187–213; these read RRRT…YRVP and DSFD…ESGY. Thr-150 is modified (phosphothreonine). At Ser-157 the chain carries Phosphoserine. Tyr-158 is modified (phosphotyrosine). The segment covering 160–174 has biased composition (basic and acidic residues); sequence RDGRSATREPPYRVP. A phosphoserine mark is found at Ser-164, Ser-188, and Ser-195. The span at 201-213 shows a compositional bias: basic and acidic residues; it reads DYDHGSRSQESGY. Tyr-202 carries the post-translational modification Phosphotyrosine. Phosphoserine occurs at positions 206, 208, and 211. Tyr-219 is modified (phosphotyrosine). Ser-234 bears the Phosphoserine mark. Residue Lys-245 forms a Glycyl lysine isopeptide (Lys-Gly) (interchain with G-Cter in SUMO2) linkage. Ser-264 carries the post-translational modification Phosphoserine. A Glycyl lysine isopeptide (Lys-Gly) (interchain with G-Cter in SUMO2) cross-link involves residue Lys-269. Ser-275 carries the post-translational modification Phosphoserine. The disordered stretch occupies residues 342-394; that stretch reads PFMLQQSTNPAPGILGPPPPSFHLGGPAVGPRGNLGAGNGNLQGPRHMQKGRV. The RRM 1 domain occupies 398–473; the sequence is RVVHIMDFQR…KPVRVHLSQK (76 aa). Glycyl lysine isopeptide (Lys-Gly) (interchain with G-Cter in SUMO2) cross-links involve residues Lys-478, Lys-487, and Lys-491. Positions 496–571 constitute an RRM 2 domain; sequence RVIHLSNLPH…RCVKVDLSEK (76 aa). 2 positions are modified to phosphoserine: Ser-509 and Ser-511. A Glycyl lysine isopeptide (Lys-Gly) (interchain with G-Cter in SUMO2) cross-link involves residue Lys-515. Lys-522 bears the N6-acetyllysine; alternate mark. Residue Lys-522 forms a Glycyl lysine isopeptide (Lys-Gly) (interchain with G-Cter in SUMO2); alternate linkage. Phosphoserine is present on Ser-533. Glycyl lysine isopeptide (Lys-Gly) (interchain with G-Cter in SUMO2) cross-links involve residues Lys-554 and Lys-555. Lys-571 carries the N6-acetyllysine modification. The disordered stretch occupies residues 588–779; it reads KKDKSRKRSY…EDYTIPDEYR (192 aa). 4 positions are modified to phosphoserine: Ser-596, Ser-598, Ser-604, and Ser-606. Basic and acidic residues predominate over residues 600 to 642; sequence DGKESPSDKKSKTDAQKTESPAEGKEQEEKSGEDGEKDTKDDQ. Residues Lys-616 and Lys-629 each participate in a glycyl lysine isopeptide (Lys-Gly) (interchain with G-Cter in SUMO2) cross-link. A compositionally biased stretch (acidic residues) spans 652 to 664; that stretch reads ESEDELLVDEEEA. A phosphoserine mark is found at Ser-653, Ser-670, Ser-672, and Ser-673. A compositionally biased stretch (low complexity) spans 665-675; sequence AALLESGSSVG. A Phosphothreonine modification is found at Thr-678. Ser-688 is subject to Phosphoserine. Residues 688–703 are compositionally biased toward basic and acidic residues; it reads SDGKKEPSDKAVKKDP. The Nuclear localization signal motif lies at 709–717; that stretch reads SKKKLKKVD. Residues Lys-718 and Lys-735 each participate in a glycyl lysine isopeptide (Lys-Gly) (interchain with G-Cter in SUMO2) cross-link. Residue Thr-740 is modified to Phosphothreonine. Ser-746 and Ser-758 each carry phosphoserine. Basic and acidic residues predominate over residues 766 to 779; it reads DENKEDYTIPDEYR. Lys-769 participates in a covalent cross-link: Glycyl lysine isopeptide (Lys-Gly) (interchain with G-Cter in SUMO2). The segment at 800-831 adopts a Matrin-type zinc-finger fold; sequence FYCKLCSLFYTNEEVAKNTHCSSLPHYQKLKK. Lys-835 is subject to N6-acetyllysine; alternate. Lys-835 participates in a covalent cross-link: Glycyl lysine isopeptide (Lys-Gly) (interchain with G-Cter in SUMO2); alternate.

Part of a complex consisting of SFPQ, NONO and MATR3. Interacts with AGO1 and AGO2. Part of a complex composed at least of ASH2L, EMSY, HCFC1, HSPA8, CCAR2, MATR3, MKI67, RBBP5, TUBB2A, WDR5 and ZNF335; this complex may have a histone H3-specific methyltransferase activity. Interacts with TARDBP. Part of the HDP-RNP complex composed of at least HEXIM1, PRKDC, XRCC5, XRCC6, paraspeckle proteins (SFPQ, NONO, PSPC1, RBM14, and MATR3) and NEAT1 RNA. Interacts with FUS. Interacts with IGF2BP1. Interacts with IGF2BP2 and IGF2BP3. Interacts with RBPMS.

The protein resides in the nucleus matrix. In terms of biological role, may play a role in transcription or may interact with other nuclear matrix proteins to form the internal fibrogranular network. In association with the SFPQ-NONO heteromer may play a role in nuclear retention of defective RNAs. Plays a role in the regulation of DNA virus-mediated innate immune response by assembling into the HDP-RNP complex, a complex that serves as a platform for IRF3 phosphorylation and subsequent innate immune response activation through the cGAS-STING pathway. Binds to N6-methyladenosine (m6A)-containing mRNAs and contributes to MYC stability by binding to m6A-containing MYC mRNAs. May bind to specific miRNA hairpins. The polypeptide is Matrin-3 (Matr3) (Mus musculus (Mouse)).